Here is a 124-residue protein sequence, read N- to C-terminus: Protein RibT (124 aa).

In terms of domain architecture, N-acetyltransferase spans Ile-3–Asn-124.

Involved in riboflavin biosynthesis. The protein is Protein RibT (ribT) of Bacillus subtilis (strain 168).